The sequence spans 152 residues: Ribosome maturation factor RimP (152 aa).

It belongs to the RimP family.

Its subcellular location is the cytoplasm. Required for maturation of 30S ribosomal subunits. The sequence is that of Ribosome maturation factor RimP from Burkholderia ambifaria (strain MC40-6).